Consider the following 186-residue polypeptide: Putative thiamine-phosphate synthase 2 (186 aa).

4-amino-2-methyl-5-(diphosphooxymethyl)pyrimidine is bound by residues 35 to 39 and N67; that span reads QLREK. Position 68 (E68) interacts with Mg(2+). S105 contacts 4-amino-2-methyl-5-(diphosphooxymethyl)pyrimidine. 131–133 lines the 2-[(2R,5Z)-2-carboxy-4-methylthiazol-5(2H)-ylidene]ethyl phosphate pocket; sequence TSS. H134 serves as a coordination point for 4-amino-2-methyl-5-(diphosphooxymethyl)pyrimidine. 2-[(2R,5Z)-2-carboxy-4-methylthiazol-5(2H)-ylidene]ethyl phosphate contacts are provided by residues G161 and 181–182; that span reads IS.

It belongs to the thiamine-phosphate synthase family. Mg(2+) is required as a cofactor.

It carries out the reaction 2-[(2R,5Z)-2-carboxy-4-methylthiazol-5(2H)-ylidene]ethyl phosphate + 4-amino-2-methyl-5-(diphosphooxymethyl)pyrimidine + 2 H(+) = thiamine phosphate + CO2 + diphosphate. It catalyses the reaction 2-(2-carboxy-4-methylthiazol-5-yl)ethyl phosphate + 4-amino-2-methyl-5-(diphosphooxymethyl)pyrimidine + 2 H(+) = thiamine phosphate + CO2 + diphosphate. The enzyme catalyses 4-methyl-5-(2-phosphooxyethyl)-thiazole + 4-amino-2-methyl-5-(diphosphooxymethyl)pyrimidine + H(+) = thiamine phosphate + diphosphate. Its pathway is cofactor biosynthesis; thiamine diphosphate biosynthesis; thiamine phosphate from 4-amino-2-methyl-5-diphosphomethylpyrimidine and 4-methyl-5-(2-phosphoethyl)-thiazole: step 1/1. Functionally, condenses 4-methyl-5-(beta-hydroxyethyl)thiazole monophosphate (THZ-P) and 2-methyl-4-amino-5-hydroxymethyl pyrimidine pyrophosphate (HMP-PP) to form thiamine monophosphate (TMP). This Aquifex aeolicus (strain VF5) protein is Putative thiamine-phosphate synthase 2 (thiE2).